A 247-amino-acid polypeptide reads, in one-letter code: 1-(5-phosphoribosyl)-5-[(5-phosphoribosylamino)methylideneamino] imidazole-4-carboxamide isomerase (247 aa).

The active-site Proton acceptor is the aspartate 8. Aspartate 129 serves as the catalytic Proton donor.

The protein belongs to the HisA/HisF family.

It is found in the cytoplasm. It carries out the reaction 1-(5-phospho-beta-D-ribosyl)-5-[(5-phospho-beta-D-ribosylamino)methylideneamino]imidazole-4-carboxamide = 5-[(5-phospho-1-deoxy-D-ribulos-1-ylimino)methylamino]-1-(5-phospho-beta-D-ribosyl)imidazole-4-carboxamide. Its pathway is amino-acid biosynthesis; L-histidine biosynthesis; L-histidine from 5-phospho-alpha-D-ribose 1-diphosphate: step 4/9. This Solidesulfovibrio magneticus (strain ATCC 700980 / DSM 13731 / RS-1) (Desulfovibrio magneticus) protein is 1-(5-phosphoribosyl)-5-[(5-phosphoribosylamino)methylideneamino] imidazole-4-carboxamide isomerase.